The primary structure comprises 228 residues: 2-C-methyl-D-erythritol 4-phosphate cytidylyltransferase (228 aa).

Belongs to the IspD/TarI cytidylyltransferase family. IspD subfamily.

It carries out the reaction 2-C-methyl-D-erythritol 4-phosphate + CTP + H(+) = 4-CDP-2-C-methyl-D-erythritol + diphosphate. It functions in the pathway isoprenoid biosynthesis; isopentenyl diphosphate biosynthesis via DXP pathway; isopentenyl diphosphate from 1-deoxy-D-xylulose 5-phosphate: step 2/6. Catalyzes the formation of 4-diphosphocytidyl-2-C-methyl-D-erythritol from CTP and 2-C-methyl-D-erythritol 4-phosphate (MEP). The sequence is that of 2-C-methyl-D-erythritol 4-phosphate cytidylyltransferase from Trichormus variabilis (strain ATCC 29413 / PCC 7937) (Anabaena variabilis).